Reading from the N-terminus, the 299-residue chain is Bifunctional phosphoglucose/phosphomannose isomerase (299 aa).

Positions 27–177 (DEVEITPSSR…IHKLMEDFQK (151 aa)) constitute an SIS domain. D-fructose 6-phosphate-binding residues include G44, S45, S84, S86, T89, and R132. Catalysis depends on E200, which acts as the Proton acceptor. D-fructose 6-phosphate is bound by residues H216 and K295. The active-site Proton donor is H216. The active-site Proton acceptor is the K295.

Belongs to the PGI/PMI family. Homodimer.

It carries out the reaction alpha-D-glucose 6-phosphate = beta-D-fructose 6-phosphate. It catalyses the reaction D-mannose 6-phosphate = D-fructose 6-phosphate. Presence or absence of metal ions or EDTA does not significantly affect the phosphoglucose isomerase activity. Its function is as follows. Dual specificity isomerase that catalyzes the isomerization of both glucose-6-phosphate and mannose-6-phosphate to fructose-6-phosphate with nearly similar catalytic efficiency. Also catalyzes the epimerization of mannose 6-phosphate to glucose 6-phosphate but the rate of epimerization reaction is 20-fold lower than that of isomerization reaction. This is Bifunctional phosphoglucose/phosphomannose isomerase from Pyrobaculum calidifontis (strain DSM 21063 / JCM 11548 / VA1).